Reading from the N-terminus, the 197-residue chain is Recombination protein RecR (197 aa).

Residues 57–72 (CSVCFGITEEDPCRLC) form a C4-type zinc finger. Positions 79–174 (TSLCVVEEPQ…RVTRLAHGIP (96 aa)) constitute a Toprim domain.

Belongs to the RecR family.

Its function is as follows. May play a role in DNA repair. It seems to be involved in an RecBC-independent recombinational process of DNA repair. It may act with RecF and RecO. The protein is Recombination protein RecR of Geobacter metallireducens (strain ATCC 53774 / DSM 7210 / GS-15).